The following is a 515-amino-acid chain: Histidine ammonia-lyase (515 aa).

Residues A142 to G144 constitute a cross-link (5-imidazolinone (Ala-Gly)). Position 143 is a 2,3-didehydroalanine (Ser) (S143).

The protein belongs to the PAL/histidase family. In terms of processing, contains an active site 4-methylidene-imidazol-5-one (MIO), which is formed autocatalytically by cyclization and dehydration of residues Ala-Ser-Gly.

Its subcellular location is the cytoplasm. The enzyme catalyses L-histidine = trans-urocanate + NH4(+). It participates in amino-acid degradation; L-histidine degradation into L-glutamate; N-formimidoyl-L-glutamate from L-histidine: step 1/3. This is Histidine ammonia-lyase from Methylobacterium nodulans (strain LMG 21967 / CNCM I-2342 / ORS 2060).